The chain runs to 475 residues: Tetratricopeptide repeat protein 29 (475 aa).

TPR repeat units lie at residues 92–131 (DALR…EDAE), 136–173 (FEDV…AQLI), 182–215 (AEAH…TQGR), 234–267 (LRTY…AKEG), 274–307 (AEAS…STDL), 314–347 (GRGY…ARNN), and 354–387 (VRAS…TVEL). Positions 437–475 (IEPDPVTEEFRGSTVEAVSQNSERLEELSRFPGDQKNET) are disordered. Over residues 459–475 (ERLEELSRFPGDQKNET) the composition is skewed to basic and acidic residues.

As to expression, expressed in spermatozoa (at protein level).

Its subcellular location is the cytoplasm. The protein resides in the cytoskeleton. It is found in the flagellum axoneme. Axonemal protein which is implicated in axonemal and/or peri-axonemal structure assembly and regulates flagellum assembly and beating and therefore sperm motility. In Homo sapiens (Human), this protein is Tetratricopeptide repeat protein 29 (TTC29).